The chain runs to 155 residues: Small ribosomal subunit protein uS7 (155 aa).

It belongs to the universal ribosomal protein uS7 family. Part of the 30S ribosomal subunit. Contacts proteins S9 and S11.

In terms of biological role, one of the primary rRNA binding proteins, it binds directly to 16S rRNA where it nucleates assembly of the head domain of the 30S subunit. Is located at the subunit interface close to the decoding center, probably blocks exit of the E-site tRNA. The polypeptide is Small ribosomal subunit protein uS7 (Chlorobium phaeobacteroides (strain DSM 266 / SMG 266 / 2430)).